Here is a 304-residue protein sequence, read N- to C-terminus: Undecaprenyl-diphosphatase (304 aa).

Helical transmembrane passes span 5–25, 47–67, 72–92, 111–131, 137–157, 209–231, 248–268, and 283–303; these read FLFILKALIIAIVEGLTEFVP, GFPEMYEVVIQLGAILAVVVL, ISSSVVEFLSYIFSFIGLKTS, FGINVIIGTIPAAILGLLFHD, LFSTKTVAIGFIVGGILLIVI, ISGLSTTVATEFTFFLAIPAMVG, TNWISLILGFIVAFIVSLVVI, and FAIYRVFAGIVLAILIFTKVI.

The protein belongs to the UppP family.

Its subcellular location is the cell membrane. The catalysed reaction is di-trans,octa-cis-undecaprenyl diphosphate + H2O = di-trans,octa-cis-undecaprenyl phosphate + phosphate + H(+). In terms of biological role, catalyzes the dephosphorylation of undecaprenyl diphosphate (UPP). Confers resistance to bacitracin. The chain is Undecaprenyl-diphosphatase from Clostridium perfringens (strain 13 / Type A).